Reading from the N-terminus, the 151-residue chain is Large ribosomal subunit protein bL9 (151 aa).

The protein belongs to the bacterial ribosomal protein bL9 family.

Its function is as follows. Binds to the 23S rRNA. The sequence is that of Large ribosomal subunit protein bL9 from Mycobacteroides abscessus (strain ATCC 19977 / DSM 44196 / CCUG 20993 / CIP 104536 / JCM 13569 / NCTC 13031 / TMC 1543 / L948) (Mycobacterium abscessus).